The following is a 267-amino-acid chain: 2-keto-3-deoxy-L-rhamnonate aldolase (267 aa).

H49 functions as the Proton acceptor in the catalytic mechanism. Q151 is a substrate binding site. Residue E153 coordinates Mg(2+). Residues A178 and D179 each coordinate substrate. D179 lines the Mg(2+) pocket.

It belongs to the HpcH/HpaI aldolase family. KDR aldolase subfamily. In terms of assembly, homohexamer. Mg(2+) is required as a cofactor.

The enzyme catalyses 2-dehydro-3-deoxy-L-rhamnonate = (S)-lactaldehyde + pyruvate. In terms of biological role, catalyzes the reversible retro-aldol cleavage of 2-keto-3-deoxy-L-rhamnonate (KDR) to pyruvate and lactaldehyde. This chain is 2-keto-3-deoxy-L-rhamnonate aldolase, found in Klebsiella pneumoniae subsp. pneumoniae (strain ATCC 700721 / MGH 78578).